Reading from the N-terminus, the 168-residue chain is Cell division inhibitor SulA (168 aa).

Residues 106-112 (ALQTGNY) are ftsZ binding. The segment at 161-168 (KIHSSLYH) is lon protease binding.

It belongs to the SulA family. Interacts with FtsZ. Post-translationally, is rapidly cleaved and degraded by the Lon protease once DNA damage is repaired.

Its function is as follows. Component of the SOS system and an inhibitor of cell division. Accumulation of SulA causes rapid cessation of cell division and the appearance of long, non-septate filaments. In the presence of GTP, binds a polymerization-competent form of FtsZ in a 1:1 ratio, thus inhibiting FtsZ polymerization and therefore preventing it from participating in the assembly of the Z ring. This mechanism prevents the premature segregation of damaged DNA to daughter cells during cell division. This Serratia marcescens protein is Cell division inhibitor SulA.